We begin with the raw amino-acid sequence, 764 residues long: Myotubularin-related protein 10-B (764 aa).

One can recognise a Myotubularin phosphatase domain in the interval phenylalanine 208 to tyrosine 649.

This sequence belongs to the protein-tyrosine phosphatase family. Non-receptor class myotubularin subfamily.

In Xenopus laevis (African clawed frog), this protein is Myotubularin-related protein 10-B (mtmr10-b).